The following is a 148-amino-acid chain: Large ribosomal subunit protein bL9 (148 aa).

It belongs to the bacterial ribosomal protein bL9 family.

Binds to the 23S rRNA. The protein is Large ribosomal subunit protein bL9 of Staphylococcus aureus (strain bovine RF122 / ET3-1).